The chain runs to 402 residues: Bacteriochlorophyllide c C-7(1)-hydroxylase (402 aa).

One can recognise a Radical SAM core domain in the interval 104-359 (VIGMNQDIIN…IKYQDRFDMP (256 aa)). [4Fe-4S] cluster-binding residues include C120, C129, and C132.

The protein belongs to the radical SAM superfamily. Requires [4Fe-4S] cluster as cofactor.

It carries out the reaction a bacteriochlorophyllide c + 2 S-adenosyl-L-methionine + H2O = a bacteriochlorophyllide e + 2 5'-deoxyadenosine + 2 L-methionine + 2 H(+). It catalyses the reaction a bacteriochlorophyllide d + 2 S-adenosyl-L-methionine + H2O = a bacteriochlorophyllide f + 2 5'-deoxyadenosine + 2 L-methionine + 2 H(+). The protein operates within porphyrin-containing compound metabolism; bacteriochlorophyll biosynthesis. Its function is as follows. Involved in the biosynthesis of bacteriochlorophyll e (BChl e). Catalyzes two consecutive hydroxylation reactions of the C-7 methyl group of bacteriochlorophyllide c (BChlide c) to form a geminal diol intermediate that spontaneously dehydrates to produce the formyl group of bacteriochlorophyllide e (BChlide e). Also able to catalyze the same reaction for bacteriochlorophyllide d (BChlide d) to give rise to bacteriochlorophyllide f (BChlide f). This is Bacteriochlorophyllide c C-7(1)-hydroxylase from Chlorobaculum limnaeum.